A 638-amino-acid chain; its full sequence is Chaperone protein HtpG (638 aa).

The interval methionine 1–arginine 328 is a; substrate-binding. The b stretch occupies residues glutamate 329 to arginine 558. Residues leucine 484–alanine 508 form a disordered region. The segment at phenylalanine 559–lysine 638 is c.

Belongs to the heat shock protein 90 family. Homodimer.

It is found in the cytoplasm. Molecular chaperone. Has ATPase activity. The sequence is that of Chaperone protein HtpG from Anaplasma marginale (strain St. Maries).